The primary structure comprises 590 residues: Oleate hydratase (590 aa).

Residues Ala33, Glu56, Ser64, and Glu82 each contribute to the FAD site. The active-site Proton acceptor is the Glu82. Tyr200 functions as the Proton donor in the catalytic mechanism. FAD-binding residues include Val249, Ser291, Thr508, and Ser512.

The protein belongs to the oleate hydratase family. In terms of assembly, monomer and homodimer. Both forms seem to be active. FAD serves as cofactor.

The catalysed reaction is (R)-10-hydroxyoctadecanoate = (9Z)-octadecenoate + H2O. The enzyme catalyses (9Z)-octadecenoate + H2O = 10-hydroxyoctadecanoate. It catalyses the reaction (9Z)-hexadecenoate + H2O = 10-hydroxyhexadecanoate. It carries out the reaction (9Z,12Z)-octadecadienoate + H2O = (12Z)-10-hydroxyoctadecenoate. The catalysed reaction is (12Z)-10-hydroxyoctadecenoate + H2O = 10,13-dihydroxyoctadecanoate. The enzyme catalyses (9Z,12Z,15Z)-octadecatrienoate + H2O = (12Z,15Z)-10-hydroxyoctadecadienoate. Its pathway is lipid metabolism; fatty acid metabolism. Catalyzes the hydration of oleate at its cis-9-double bond to yield 10-hydroxyoctadecanoate, probably in the (R) configuration, and of linoleate at its cis-9- and cis-12-double bond to yield 10-hydroxy-12-octadecenoate and 10,13-dihydroxyoctadecanoate. Is not active on trans-double bonds and esterified fatty acids as substrate; is only active on cis-9- and/or cis-12-double bond of C16 and C18 fatty acids without any trans-configurations, producing 10-hydroxy and 10,13-dihydroxy derivatives. Appears to play a role in oleic acid detoxification and bacterial virulence. This chain is Oleate hydratase (sph), found in Streptococcus pyogenes serotype M49 (strain NZ131).